The primary structure comprises 97 residues: Large ribosomal subunit protein uL23 (97 aa).

This sequence belongs to the universal ribosomal protein uL23 family. In terms of assembly, part of the 50S ribosomal subunit. Contacts protein L29, and trigger factor when it is bound to the ribosome.

Its function is as follows. One of the early assembly proteins it binds 23S rRNA. One of the proteins that surrounds the polypeptide exit tunnel on the outside of the ribosome. Forms the main docking site for trigger factor binding to the ribosome. This is Large ribosomal subunit protein uL23 from Anaeromyxobacter sp. (strain Fw109-5).